The following is a 493-amino-acid chain: Glycerol kinase (493 aa).

Thr12 is an ADP binding site. Thr12, Thr13, and Ser14 together coordinate ATP. Thr12 provides a ligand contact to sn-glycerol 3-phosphate. Arg16 is a binding site for ADP. Residues Arg82, Glu83, Tyr132, and Asp239 each contribute to the sn-glycerol 3-phosphate site. The glycerol site is built by Arg82, Glu83, Tyr132, Asp239, and Gln240. The ADP site is built by Thr261 and Gly303. Thr261, Gly303, Gln307, and Gly402 together coordinate ATP. Gly402 and Asn406 together coordinate ADP.

This sequence belongs to the FGGY kinase family.

The enzyme catalyses glycerol + ATP = sn-glycerol 3-phosphate + ADP + H(+). It participates in polyol metabolism; glycerol degradation via glycerol kinase pathway; sn-glycerol 3-phosphate from glycerol: step 1/1. In terms of biological role, key enzyme in the regulation of glycerol uptake and metabolism. Catalyzes the phosphorylation of glycerol to yield sn-glycerol 3-phosphate. This is Glycerol kinase from Thermococcus gammatolerans (strain DSM 15229 / JCM 11827 / EJ3).